We begin with the raw amino-acid sequence, 431 residues long: MSSIEPWPAPFAPTPVHATVTVPGSKSQTNRTLVLAALAAAQGQGSSTITGALRSRDTDLMIEALQTLGLRVDGTGSELTVSGRIRPCPEARVDCGLAGTVLRFAPPLAALSAAPITFDGDEQARARPIAPLLDALRGLGVPVDGAGLPFRVQGTGSVAGGTVAIDASASSQFVSGLLLSGASFTDGLTVQHTGSELPSAPHIAMTVQMLRQAGVDVDDSIPNRWLVRPGALRPRHWDAEPDLTNAVAFLAAAVVTGGTVTITGWPADSVQPAKNILDILQTLNSTVRHIDSCLQVQGPQSYRGFDVDLRDVGELTPSVAALAALASPGSVSRLAGIAHLRGHETDRLAALSTEINRLGGNCEQTSDGLVITATPLRPGSWRAYADHRMAMAGAIVGLRVAGVEVDDIGATSKTLPEFPQLWTEMVEGSSG.

3-phosphoshikimate contacts are provided by Lys-26, Ser-27, and Arg-31. Lys-26 contacts phosphoenolpyruvate. Residues Gly-99 and Arg-127 each coordinate phosphoenolpyruvate. Residues Ser-170, Ser-171, Gln-172, Ser-199, Glu-314, and His-343 each coordinate 3-phosphoshikimate. Gln-172 is a phosphoenolpyruvate binding site. The active-site Proton acceptor is Glu-314. Positions 347, 388, and 413 each coordinate phosphoenolpyruvate.

The protein belongs to the EPSP synthase family. Monomer.

It localises to the cytoplasm. The catalysed reaction is 3-phosphoshikimate + phosphoenolpyruvate = 5-O-(1-carboxyvinyl)-3-phosphoshikimate + phosphate. It functions in the pathway metabolic intermediate biosynthesis; chorismate biosynthesis; chorismate from D-erythrose 4-phosphate and phosphoenolpyruvate: step 6/7. In terms of biological role, catalyzes the transfer of the enolpyruvyl moiety of phosphoenolpyruvate (PEP) to the 5-hydroxyl of shikimate-3-phosphate (S3P) to produce enolpyruvyl shikimate-3-phosphate and inorganic phosphate. In Mycobacterium ulcerans (strain Agy99), this protein is 3-phosphoshikimate 1-carboxyvinyltransferase.